Reading from the N-terminus, the 303-residue chain is Signal recognition particle receptor FtsY (303 aa).

Residues 108–115, 190–194, and 254–257 each bind GTP; these read GVNGVGKT, DTAGR, and TKLD.

Belongs to the GTP-binding SRP family. FtsY subfamily. In terms of assembly, part of the signal recognition particle protein translocation system, which is composed of SRP and FtsY. SRP is a ribonucleoprotein composed of Ffh and a 4.5S RNA molecule.

It localises to the cell inner membrane. The protein localises to the cytoplasm. It catalyses the reaction GTP + H2O = GDP + phosphate + H(+). Involved in targeting and insertion of nascent membrane proteins into the cytoplasmic membrane. Acts as a receptor for the complex formed by the signal recognition particle (SRP) and the ribosome-nascent chain (RNC). Interaction with SRP-RNC leads to the transfer of the RNC complex to the Sec translocase for insertion into the membrane, the hydrolysis of GTP by both Ffh and FtsY, and the dissociation of the SRP-FtsY complex into the individual components. This Rickettsia typhi (strain ATCC VR-144 / Wilmington) protein is Signal recognition particle receptor FtsY.